Consider the following 466-residue polypeptide: Coagulation factor VII (466 aa).

The N-terminal stretch at 1-20 is a signal peptide; the sequence is MVSQALRLLCLLLGLQGCLA. Residues 21–60 constitute a propeptide that is removed on maturation; it reads AGGVAKASGGETRDMPWKPGPHRVFVTQEEAHGVLHRRRR. The region spanning 61-105 is the Gla domain; the sequence is ANAFLEELRPGSLERECKEEQCSFEEAREIFKDAERTKLFWISYS. 10 positions are modified to 4-carboxyglutamate: glutamate 66, glutamate 67, glutamate 74, glutamate 76, glutamate 79, glutamate 80, glutamate 85, glutamate 86, glutamate 89, and glutamate 95. Residues cysteine 77 and cysteine 82 are joined by a disulfide bond. The EGF-like 1; calcium-binding domain maps to 106–142; that stretch reads DGDQCASSPCQNGGSCKDQLQSYICFCLPAFEGRNCE. 10 cysteine pairs are disulfide-bonded: cysteine 110–cysteine 121, cysteine 115–cysteine 130, cysteine 132–cysteine 141, cysteine 151–cysteine 162, cysteine 158–cysteine 172, cysteine 174–cysteine 187, cysteine 195–cysteine 322, cysteine 219–cysteine 224, cysteine 238–cysteine 254, and cysteine 370–cysteine 389. A glycan (O-linked (Glc...) serine; alternate) is linked at serine 112. Serine 112 carries O-linked (Xyl...) serine; alternate glycosylation. O-linked (Fuc) serine glycosylation occurs at serine 120. Aspartate 123 is subject to (3R)-3-hydroxyaspartate. The region spanning 147-188 is the EGF-like 2 domain; the sequence is DQLICVNENGGCEQYCSDHTGTKRSCRCHEGYSLLADGVSCT. Asparagine 205 carries N-linked (GlcNAc...) asparagine glycosylation. The region spanning 213–452 is the Peptidase S1 domain; the sequence is IVGGKVCPKG…YIEWLQKLMR (240 aa). Residues histidine 253 and aspartate 302 each act as charge relay system in the active site. Asparagine 382 carries an N-linked (GlcNAc...) asparagine glycan. A substrate-binding site is contributed by aspartate 398. Cysteine 400 and cysteine 428 are oxidised to a cystine. Serine 404 acts as the Charge relay system in catalysis.

It belongs to the peptidase S1 family. Heterodimer of a light chain and a heavy chain linked by a disulfide bond. Interacts (activated) with iripin-8, a serine protease inhibitor from Ixodes ricinus saliva. The vitamin K-dependent, enzymatic carboxylation of some glutamate residues allows the modified protein to bind calcium. Post-translationally, the iron and 2-oxoglutarate dependent 3-hydroxylation of aspartate and asparagine is (R) stereospecific within EGF domains. In terms of processing, O- and N-glycosylated. N-glycosylation at Asn-205 occurs cotranslationally and is mediated by STT3A-containing complexes, while glycosylation at Asn-382 is post-translational and is mediated STT3B-containing complexes before folding. O-fucosylated by POFUT1 on a conserved serine or threonine residue found in the consensus sequence C2-X(4,5)-[S/T]-C3 of EGF domains, where C2 and C3 are the second and third conserved cysteines. Can be either O-glucosylated or O-xylosylated at Ser-112 by POGLUT1 in vitro. As to expression, plasma.

The protein resides in the secreted. It catalyses the reaction Selective cleavage of Arg-|-Ile bond in factor X to form factor Xa.. Functionally, initiates the extrinsic pathway of blood coagulation. Serine protease that circulates in the blood in a zymogen form. Factor VII is converted to factor VIIa by factor Xa, factor XIIa, factor IXa, or thrombin by minor proteolysis. In the presence of tissue factor and calcium ions, factor VIIa then converts factor X to factor Xa by limited proteolysis. Factor VIIa also converts factor IX to factor IXa in the presence of tissue factor and calcium. This is Coagulation factor VII (F7) from Homo sapiens (Human).